The following is a 420-amino-acid chain: Bile acid-CoA:amino acid N-acyltransferase (420 aa).

Residue Lys40 is modified to N6-succinyllysine. Position 125 is a phosphoserine (Ser125). Residues Cys235 and Asp328 each act as charge relay system in the active site. An N6-succinyllysine mark is found at Lys346 and Lys350. His362 acts as the Charge relay system in catalysis. Lys409 carries the post-translational modification N6-succinyllysine. Residue Ser418 is modified to Phosphoserine.

It belongs to the C/M/P thioester hydrolase family. In terms of assembly, monomer. As to expression, highly expressed in liver, kidney, gallbladder, proximal intestine and distal intestine. Weakly expressed in adrenal gland, lung, brain and muscle.

Its subcellular location is the cytoplasm. The protein resides in the cytosol. The protein localises to the peroxisome. It carries out the reaction choloyl-CoA + glycine = glycocholate + CoA + H(+). It catalyses the reaction hexadecanoyl-CoA + H2O = hexadecanoate + CoA + H(+). The enzyme catalyses choloyl-CoA + H2O = cholate + CoA + H(+). The catalysed reaction is chenodeoxycholoyl-CoA + H2O = chenodeoxycholate + CoA + H(+). It carries out the reaction eicosanoyl-CoA + H2O = eicosanoate + CoA + H(+). It catalyses the reaction octadecanoyl-CoA + H2O = octadecanoate + CoA + H(+). The enzyme catalyses docosanoyl-CoA + H2O = docosanoate + CoA + H(+). The catalysed reaction is tetracosanoyl-CoA + H2O = tetracosanoate + CoA + H(+). It carries out the reaction hexacosanoyl-CoA + H2O = hexacosanoate + CoA + H(+). It catalyses the reaction dodecanoyl-CoA + H2O = dodecanoate + CoA + H(+). The enzyme catalyses tetradecanoyl-CoA + H2O = tetradecanoate + CoA + H(+). The catalysed reaction is choloyl-CoA + taurine = taurocholate + CoA + H(+). It carries out the reaction chenodeoxycholoyl-CoA + glycine = glycochenodeoxycholate + CoA + H(+). It catalyses the reaction chenodeoxycholoyl-CoA + taurine = taurochenodeoxycholate + CoA + H(+). The enzyme catalyses eicosanoyl-CoA + glycine = N-eicosanoylglycinate + CoA + H(+). The catalysed reaction is hexacosanoyl-CoA + glycine = N-hexacosanoylglycine + CoA + H(+). It carries out the reaction docosanoyl-CoA + glycine = N-docosanoylglycine + CoA + H(+). Functionally, catalyzes the amidation of bile acids (BAs) with the amino acid taurine. Selective for taurine conjugation of cholyl CoA and only taurine-conjugated BAs are found in bile. Amidation of BAs in the liver with taurine prior to their excretion into bile is an important biochemical event in bile acid metabolism. This conjugation (or amidation) plays several important biological roles in that it promotes the secretion of BAs and cholesterol into bile and increases the detergent properties of BAs in the intestine, which facilitates lipid and vitamin absorption. May also act as an acyl-CoA thioesterase that regulates intracellular levels of free fatty acids. In vitro, catalyzes the hydrolysis of long- and very long-chain saturated acyl-CoAs to the free fatty acid and coenzyme A (CoASH), and conjugates glycine to these acyl-CoAs. The sequence is that of Bile acid-CoA:amino acid N-acyltransferase (Baat) from Mus musculus (Mouse).